The chain runs to 540 residues: Glucose-6-phosphate isomerase (540 aa).

Glu-346 (proton donor) is an active-site residue. Active-site residues include His-377 and Lys-505.

Belongs to the GPI family.

It is found in the cytoplasm. The enzyme catalyses alpha-D-glucose 6-phosphate = beta-D-fructose 6-phosphate. The protein operates within carbohydrate biosynthesis; gluconeogenesis. It functions in the pathway carbohydrate degradation; glycolysis; D-glyceraldehyde 3-phosphate and glycerone phosphate from D-glucose: step 2/4. Functionally, catalyzes the reversible isomerization of glucose-6-phosphate to fructose-6-phosphate. The protein is Glucose-6-phosphate isomerase of Francisella philomiragia subsp. philomiragia (strain ATCC 25017 / CCUG 19701 / FSC 153 / O#319-036).